The chain runs to 976 residues: Receptor-like protein 14 (976 aa).

A signal peptide spans 1 to 26; that stretch reads MERKVFSGQNLIWVMLLLVQLRGYKC. At 27–928 the chain is on the extracellular side; sequence CIEKERKALL…DDDDEAAIDM (902 aa). Residues Asn-60, Asn-75, Asn-98, Asn-112, Asn-151, Asn-185, and Asn-200 are each glycosylated (N-linked (GlcNAc...) asparagine). 17 LRR repeats span residues 105 to 127, 137 to 160, 162 to 185, 186 to 209, 210 to 233, 234 to 258, 260 to 283, 284 to 306, 308 to 331, 333 to 358, 359 to 381, 382 to 405, 407 to 428, 429 to 452, 454 to 477, 478 to 501, and 503 to 528; these read FEEL…LFDD, LRNL…FLNA, TSLT…ELKN, LTKL…FTHL, EKLK…ELKV, LTNL…VFCE, KNLR…LGNL, NKLR…SFNS, ESLE…PLAN, TKLK…WLPK, FQLT…LVYQ, TNLR…LLEN, PELK…PTIV, HKLQ…IGHV, PRLL…MGEM, NDIS…LLTG, and FSLI…RLTS. N-linked (GlcNAc...) asparagine glycosylation is present at Asn-331. N-linked (GlcNAc...) asparagine glycosylation is present at Asn-416. 2 N-linked (GlcNAc...) asparagine glycosylation sites follow: Asn-460 and Asn-489. The LRR 18; degenerate repeat unit spans residues 530–549; sequence IVLRMHNNLFTGEIGVGLRT. LRR repeat units follow at residues 550–573, 575–599, 600–623, 625–645, 646–669, 671–692, 693–715, 782–805, 806–829, 831–854, and 856–879; these read LVNL…SIPP, SSHL…LLAI, HHLN…VVNS, YGIK…VTLL, ENAY…VNTG, MITL…LCDL, TSIR…CLNH, LDYM…ELGD, LSKL…NFSK, KDIE…LTNL, and SLAV…QFNT. Asn-552 is a glycosylation site (N-linked (GlcNAc...) asparagine). The N-linked (GlcNAc...) asparagine glycan is linked to Asn-633. N-linked (GlcNAc...) asparagine glycosylation occurs at Asn-680. 5 N-linked (GlcNAc...) asparagine glycosylation sites follow: Asn-813, Asn-826, Asn-853, Asn-861, and Asn-866. The interval 897-922 is disordered; sequence DRSCEGKKNTKEADNGGEEEEEDDDD. Basic and acidic residues predominate over residues 898–910; that stretch reads RSCEGKKNTKEAD. Over residues 911–922 the composition is skewed to acidic residues; sequence NGGEEEEEDDDD. A helical membrane pass occupies residues 929–949; sequence VVLYWTTGSTYAIALIGILVL. Residues 950 to 976 are Cytoplasmic-facing; that stretch reads MCFDCPWRRTWLCIVDAFIASGKSMFS.

It belongs to the RLP family.

The protein resides in the cell membrane. This is Receptor-like protein 14 from Arabidopsis thaliana (Mouse-ear cress).